We begin with the raw amino-acid sequence, 603 residues long: Threonine--tRNA ligase (603 aa).

Residues 197–499 form a catalytic region; the sequence is DHRKLGKELG…LIEEYAGDFP (303 aa). Residues cysteine 296, histidine 347, and histidine 476 each coordinate Zn(2+).

It belongs to the class-II aminoacyl-tRNA synthetase family. Homodimer. It depends on Zn(2+) as a cofactor.

The protein localises to the cytoplasm. The enzyme catalyses tRNA(Thr) + L-threonine + ATP = L-threonyl-tRNA(Thr) + AMP + diphosphate + H(+). Its function is as follows. Catalyzes the attachment of threonine to tRNA(Thr) in a two-step reaction: L-threonine is first activated by ATP to form Thr-AMP and then transferred to the acceptor end of tRNA(Thr). Also edits incorrectly charged L-seryl-tRNA(Thr). The protein is Threonine--tRNA ligase of Synechocystis sp. (strain ATCC 27184 / PCC 6803 / Kazusa).